The sequence spans 689 residues: Ribonuclease J (689 aa).

A disordered region spans residues 1–88 (MTDNNQNNEN…RNYAQEELDS (88 aa)). Residues 9 to 24 (ENHENSSENSKADEMR) are compositionally biased toward basic and acidic residues. The span at 56-78 (HHKKEHRPNKKPNNHHKQKHAKT) shows a compositional bias: basic residues. N6-acetyllysine is present on residues lysine 132 and lysine 138. Histidine 206, histidine 208, aspartate 210, histidine 211, histidine 275, and aspartate 297 together coordinate Zn(2+). N6-acetyllysine is present on residues lysine 321, lysine 335, and lysine 395. 498–502 (HVSGH) lines the substrate pocket. Lysine 509 bears the N6-acetyllysine mark. Residue histidine 524 coordinates Zn(2+). 3 positions are modified to N6-acetyllysine: lysine 545, lysine 632, and lysine 647.

Belongs to the metallo-beta-lactamase superfamily. RNA-metabolizing metallo-beta-lactamase-like family. Bacterial RNase J subfamily. Homodimer. Homotetramer; dimer of homodimers. Interacts with RNA helicase RhpA, might be a member of a minimal RNA degradosome complex. Zn(2+) is required as a cofactor. Acetylated on nine lysine residues. Some of the residues are acetylated by multiple different mechanisms. RimL is partially responsible for the acetylation of Lys-321, Lys-395 and Lys-647. HPB8_1270 homolog is partially responsible for the acetylation of Lys-321, Lys-395, Lys-509 and Lys-647. Acetyl-phosphate-mediated non-enzymatic acetylation pathway takes part in the acetylation of Lys-132, Lys-321, Lys-395, Lys-509 and Lys-647. Acetylation of the remaining residues Lys-138, Lys-335, Lys-545 and Lys-632 occurs by a yet undetermined mechanism. Acetylation on a number of these residues is important for growth regulation and proper cell morphology.

Its subcellular location is the cytoplasm. Catalytic activity is regulated by the balance between homodimers and homotetramers, with homotetramers being the active forms of this enzyme. Acetylation allosterically regulates the homooligomerization state and hence the catalytic activity. An RNase that has 5'-3' exoribonuclease and endoribonuclease activity. Degrades 5'-monophosphorylated ssRNA and dsRNA, considerably more active on ssRNA. Association with RhpA significantly increases the dsRNase activity. Degrades RNA substrate with hairpin structures at both ends with low activity, but presence of RhpA significantly increases the activity on this substrate. Stimulates ATPase activity of RNA helicase RhpA. Involved in stabilization of mRNA but apparently not rRNA. This chain is Ribonuclease J, found in Helicobacter pylori (strain ATCC 700392 / 26695) (Campylobacter pylori).